The primary structure comprises 281 residues: Fibrinogen-like protein 1-like protein (281 aa).

The signal sequence occupies residues 1–33 (MGLQAGTRQLHGNLILLPVAVVMLLLCTSPVCA). Residues 34–246 (TASVGLPADC…RPSSWSNPPM (213 aa)) enclose the Fibrinogen C-terminal domain. Cystine bridges form between Cys43-Cys69 and Cys201-Cys213. Positions 260 to 269 (PSRSPSLPSP) are enriched in low complexity. Positions 260–281 (PSRSPSLPSPITATHTVRNQLQ) are disordered. Positions 270–281 (ITATHTVRNQLQ) are enriched in polar residues.

As to expression, expressed in smal intestine, colon and lung.

In terms of biological role, shows a cytidine deaminase activity on 2'-deoxycytidine (in vitro), however shows no RNA editing activity (in vitro). In Gallus gallus (Chicken), this protein is Fibrinogen-like protein 1-like protein.